A 189-amino-acid chain; its full sequence is Elongation factor P (189 aa).

Position 34 is an N6-(3,6-diaminohexanoyl)-5-hydroxylysine (Lys34).

Belongs to the elongation factor P family. Post-translationally, may be beta-lysylated on the epsilon-amino group of Lys-34 by the combined action of EpmA and EpmB, and then hydroxylated on the C5 position of the same residue by EpmC (if this protein is present). Lysylation is critical for the stimulatory effect of EF-P on peptide-bond formation. The lysylation moiety may extend toward the peptidyltransferase center and stabilize the terminal 3-CCA end of the tRNA. Hydroxylation of the C5 position on Lys-34 may allow additional potential stabilizing hydrogen-bond interactions with the P-tRNA.

It is found in the cytoplasm. It functions in the pathway protein biosynthesis; polypeptide chain elongation. Functionally, involved in peptide bond synthesis. Alleviates ribosome stalling that occurs when 3 or more consecutive Pro residues or the sequence PPG is present in a protein, possibly by augmenting the peptidyl transferase activity of the ribosome. Modification of Lys-34 is required for alleviation. In Francisella tularensis subsp. novicida (strain U112), this protein is Elongation factor P.